Consider the following 467-residue polypeptide: Gamma-aminobutyric acid receptor subunit gamma-3 (467 aa).

Residues 1-17 form the signal peptide; it reads MAPKLLLLLCLFSGLHA. Residues 18–256 are Extracellular-facing; the sequence is RSRKVEEDEY…FELSRRMGYF (239 aa). Residue asparagine 110 is glycosylated (N-linked (GlcNAc...) asparagine). A disulfide bridge connects residues cysteine 171 and cysteine 185. N-linked (GlcNAc...) asparagine glycosylation is present at asparagine 228. Residues 257 to 277 traverse the membrane as a helical segment; sequence TIQTYIPCILTVVLSWVSFWI. Residues 278–283 lie on the Cytoplasmic side of the membrane; the sequence is KKDATP. A helical transmembrane segment spans residues 284 to 303; the sequence is ARTALGITTVLTMTTLSTIA. The Extracellular portion of the chain corresponds to 304–311; it reads RKSLPRVS. A helical transmembrane segment spans residues 312 to 332; the sequence is YVTAMDLFVTVCFLFVFAALM. At 333–446 the chain is on the cytoplasmic side; the sequence is EYATLNYYSS…DILELDSYSR (114 aa). A helical transmembrane segment spans residues 447–467; sequence VFFPTSFLLFNLVYWVGYLYL.

Belongs to the ligand-gated ion channel (TC 1.A.9) family. Gamma-aminobutyric acid receptor (TC 1.A.9.5) subfamily. GABRG3 sub-subfamily. In terms of assembly, heteropentamer, formed by a combination of alpha (GABRA1-6), beta (GABRB1-3), gamma (GABRG1-3), delta (GABRD), epsilon (GABRE), rho (GABRR1-3), pi (GABRP) and theta (GABRQ) chains, each subunit exhibiting distinct physiological and pharmacological properties. In terms of processing, may be palmitoylated. Expressed in brain.

It localises to the postsynaptic cell membrane. The protein resides in the cell membrane. It carries out the reaction chloride(in) = chloride(out). Functionally, gamma subunit of the heteropentameric ligand-gated chloride channel gated by gamma-aminobutyric acid (GABA), a major inhibitory neurotransmitter in the brain. GABA-gated chloride channels, also named GABA(A) receptors (GABAAR), consist of five subunits arranged around a central pore and contain GABA active binding site(s) located at the alpha and beta subunit interface(s). When activated by GABA, GABAARs selectively allow the flow of chloride across the cell membrane down their electrochemical gradient. The protein is Gamma-aminobutyric acid receptor subunit gamma-3 of Homo sapiens (Human).